Consider the following 144-residue polypeptide: Large ribosomal subunit protein uL15 (144 aa).

A disordered region spans residues 1-60 (MRLNSLRPAAGSRPDANRVGRGAGTGNGKTAGRGHKGQHSRSGGFTKVGFEGGQMPLQRR). The segment covering 21-31 (RGAGTGNGKTA) has biased composition (gly residues).

Belongs to the universal ribosomal protein uL15 family. In terms of assembly, part of the 50S ribosomal subunit.

Its function is as follows. Binds to the 23S rRNA. The polypeptide is Large ribosomal subunit protein uL15 (Alkalilimnicola ehrlichii (strain ATCC BAA-1101 / DSM 17681 / MLHE-1)).